The following is a 581-amino-acid chain: Arginine--tRNA ligase (581 aa).

The 'HIGH' region signature appears at 126–136; the sequence is PNLAKEMHVGH.

It belongs to the class-I aminoacyl-tRNA synthetase family. In terms of assembly, monomer.

Its subcellular location is the cytoplasm. The enzyme catalyses tRNA(Arg) + L-arginine + ATP = L-arginyl-tRNA(Arg) + AMP + diphosphate. This is Arginine--tRNA ligase from Shewanella sp. (strain ANA-3).